A 290-amino-acid chain; its full sequence is 4-hydroxy-3-methylbut-2-enyl diphosphate reductase (290 aa).

C13 is a [4Fe-4S] cluster binding site. Positions 41 and 75 each coordinate (2E)-4-hydroxy-3-methylbut-2-enyl diphosphate. 2 residues coordinate dimethylallyl diphosphate: H41 and H75. Residues H41 and H75 each coordinate isopentenyl diphosphate. C97 is a binding site for [4Fe-4S] cluster. H129 lines the (2E)-4-hydroxy-3-methylbut-2-enyl diphosphate pocket. A dimethylallyl diphosphate-binding site is contributed by H129. H129 contributes to the isopentenyl diphosphate binding site. E131 serves as the catalytic Proton donor. Residue T167 participates in (2E)-4-hydroxy-3-methylbut-2-enyl diphosphate binding. C198 provides a ligand contact to [4Fe-4S] cluster. (2E)-4-hydroxy-3-methylbut-2-enyl diphosphate-binding residues include S226, S227, N228, and S270. Residues S226, S227, N228, and S270 each contribute to the dimethylallyl diphosphate site. Residues S226, S227, N228, and S270 each contribute to the isopentenyl diphosphate site.

Belongs to the IspH family. [4Fe-4S] cluster is required as a cofactor.

The enzyme catalyses isopentenyl diphosphate + 2 oxidized [2Fe-2S]-[ferredoxin] + H2O = (2E)-4-hydroxy-3-methylbut-2-enyl diphosphate + 2 reduced [2Fe-2S]-[ferredoxin] + 2 H(+). It catalyses the reaction dimethylallyl diphosphate + 2 oxidized [2Fe-2S]-[ferredoxin] + H2O = (2E)-4-hydroxy-3-methylbut-2-enyl diphosphate + 2 reduced [2Fe-2S]-[ferredoxin] + 2 H(+). It participates in isoprenoid biosynthesis; dimethylallyl diphosphate biosynthesis; dimethylallyl diphosphate from (2E)-4-hydroxy-3-methylbutenyl diphosphate: step 1/1. Its pathway is isoprenoid biosynthesis; isopentenyl diphosphate biosynthesis via DXP pathway; isopentenyl diphosphate from 1-deoxy-D-xylulose 5-phosphate: step 6/6. Its function is as follows. Catalyzes the conversion of 1-hydroxy-2-methyl-2-(E)-butenyl 4-diphosphate (HMBPP) into a mixture of isopentenyl diphosphate (IPP) and dimethylallyl diphosphate (DMAPP). Acts in the terminal step of the DOXP/MEP pathway for isoprenoid precursor biosynthesis. The chain is 4-hydroxy-3-methylbut-2-enyl diphosphate reductase from Bacteroides fragilis (strain ATCC 25285 / DSM 2151 / CCUG 4856 / JCM 11019 / LMG 10263 / NCTC 9343 / Onslow / VPI 2553 / EN-2).